Consider the following 138-residue polypeptide: Putative pre-16S rRNA nuclease (138 aa).

Belongs to the YqgF nuclease family.

The protein localises to the cytoplasm. Functionally, could be a nuclease involved in processing of the 5'-end of pre-16S rRNA. This Listeria monocytogenes serotype 4b (strain CLIP80459) protein is Putative pre-16S rRNA nuclease.